Reading from the N-terminus, the 427-residue chain is Interleukin-13 receptor subunit alpha-1 (427 aa).

Positions 1–21 (MEWPARLCGLWALLLCAGGGG) are cleaved as a signal peptide. The Extracellular segment spans residues 22–343 (GGGGAAPTET…MSIGKKRNST (322 aa)). Fibronectin type-III domains follow at residues 34–123 (PVTN…PPEG), 128–226 (AVTE…TSRV), and 227–339 (KPDP…IGKK). Asn-37 and Asn-61 each carry an N-linked (GlcNAc...) asparagine glycan. 3 cysteine pairs are disulfide-bonded: Cys-62–Cys-102, Cys-95–Cys-117, and Cys-134–Cys-144. Asn-105, Asn-138, and Asn-157 each carry an N-linked (GlcNAc...) asparagine glycan. The cysteines at positions 173 and 185 are disulfide-linked. Residues Asn-235, Asn-265, Asn-293, Asn-329, and Asn-341 are each glycosylated (N-linked (GlcNAc...) asparagine). 2 disulfides stabilise this stretch: Cys-257–Cys-320 and Cys-282–Cys-296. Positions 327-331 (WSNWS) match the WSXWS motif motif. The chain crosses the membrane as a helical span at residues 344–367 (LYITMLLIVPVIVAGAIIVLLLYL). The Cytoplasmic portion of the chain corresponds to 368 to 427 (KRLKIIIFPPIPDPGKIFKEMFGDQNDDTLHWKKYDIYEKQTKEETDSVVLIENLKKASQ). The Box 1 motif signature appears at 374–382 (IFPPIPDPG).

Belongs to the type I cytokine receptor family. Type 5 subfamily. Interleukin-13 receptor is a complex of IL4R, IL13RA1, and possibly other components. Interacts with TRAF3IP1. Interacts with IL4. In terms of tissue distribution, ubiquitous. Highest levels in heart, liver, skeletal muscle and ovary; lowest levels in brain, lung and kidney. Also found in B-cells, T-cells and endothelial cells.

Its subcellular location is the membrane. Functionally, binds with low affinity to interleukin-13 (IL13). Together with IL4RA can form a functional receptor for IL13. Also serves as an alternate accessory protein to the common cytokine receptor gamma chain for interleukin-4 (IL4) signaling, but cannot replace the function of IL2RG in allowing enhanced interleukin-2 (IL2) binding activity. This is Interleukin-13 receptor subunit alpha-1 (IL13RA1) from Homo sapiens (Human).